The sequence spans 179 residues: Cytoglobin-2 (179 aa).

The span at Met-1–Glu-11 shows a compositional bias: acidic residues. Residues Met-1–Thr-20 form a disordered region. Residues Pro-18–Thr-167 enclose the Globin domain. His-81 and His-113 together coordinate heme b.

It belongs to the globin family. Monomeric. As to expression, expressed in all tissues examined, with highest levels in brain and eye, and considerably lower levels in skin, gut, heart, gill, liver and muscle.

It is found in the cytoplasm. It localises to the nucleus. The enzyme catalyses Fe(II)-heme b-[protein] + nitric oxide + O2 = Fe(III)-heme b-[protein] + nitrate. It carries out the reaction Fe(III)-heme b-[protein] + nitric oxide + H2O = Fe(II)-heme b-[protein] + nitrite + 2 H(+). The catalysed reaction is 2 superoxide + 2 H(+) = H2O2 + O2. It catalyses the reaction H2O2 + AH2 = A + 2 H2O. Functionally, probable multifunctional globin with a hexacoordinated heme iron required for the catalysis of various reactions depending on redox condition of the cell as well as oxygen availability. Has a nitric oxide dioxygenase (NOD) activity and is most probably involved in cell-mediated and oxygen-dependent nitric oxide consumption. Under normoxic conditions functions as a nitric oxide dioxygenase (NOD) but under hypoxic conditions the globin may switch its function to that of a nitrite (NO2) reductase (NiR), generating nitric oxide. Could also have peroxidase and superoxide dismutase activities, detoxifying reactive oxygen species and protecting cells against oxidative stress. Also binds dioxygen with low affinity and could function as an oxygen sensor but has probably no function as a respiratory oxygen carrier. The polypeptide is Cytoglobin-2 (Danio rerio (Zebrafish)).